Here is a 225-residue protein sequence, read N- to C-terminus: Endo-1,4-beta-xylanase (225 aa).

An N-terminal signal peptide occupies residues 1–31 (MVGFTPVALAALAATGALAFPAGNATELEKR). Residue Gln32 is modified to Pyrrolidone carboxylic acid. The GH11 domain occupies 32 to 222 (QTTPNSEGWH…SSGYARITVA (191 aa)). Glu117 (nucleophile) is an active-site residue. Cys141 and Cys185 are oxidised to a cystine. Glu209 functions as the Proton donor in the catalytic mechanism.

The catalysed reaction is Endohydrolysis of (1-&gt;4)-beta-D-xylosidic linkages in xylans.. It participates in glycan degradation; xylan degradation. This is Endo-1,4-beta-xylanase (XYNA) from Thermomyces lanuginosus (Humicola lanuginosa).